A 289-amino-acid polypeptide reads, in one-letter code: MRSIDRPGGQAARPTIGSVAGASNTRTRDARSLPDTPPLKAAAENFSFYYGQFQALKSITLPVYEKHVTALIGPSGCGKSTLLRACNRMHDLSPGNRYEGAIRLLPDNTNLLDPAVDPIEVRMRIGMVFQKPNPFPKSIYENVAYGLRIRGEKSRSVLDDRVEEALKGAALWAEVAHRLNEPAFALSGGQQQRLCIARCLATDPEVLLFDEPTSALDPIATASIEELIDQLRQKVTILIVTHNMQQAARVSDFTAYMYLGELIEFGQTRQLFVNPVRRETEDYITGRFG.

The interval 1–37 (MRSIDRPGGQAARPTIGSVAGASNTRTRDARSLPDTP) is disordered. The 244-residue stretch at 41 to 284 (AAAENFSFYY…PVRRETEDYI (244 aa)) folds into the ABC transporter domain. Residue 73-80 (GPSGCGKS) participates in ATP binding.

It belongs to the ABC transporter superfamily. Phosphate importer (TC 3.A.1.7) family. The complex is composed of two ATP-binding proteins (PstB), two transmembrane proteins (PstC and PstA) and a solute-binding protein (PstS).

Its subcellular location is the cell inner membrane. It catalyses the reaction phosphate(out) + ATP + H2O = ADP + 2 phosphate(in) + H(+). Functionally, part of the ABC transporter complex PstSACB involved in phosphate import. Responsible for energy coupling to the transport system. This Aromatoleum aromaticum (strain DSM 19018 / LMG 30748 / EbN1) (Azoarcus sp. (strain EbN1)) protein is Phosphate import ATP-binding protein PstB.